The sequence spans 404 residues: p-hydroxybenzoate hydroxylase (404 aa).

Residues Glu-35, 45–50 (RIRAGI), and Gln-105 contribute to the FAD site. Residues Tyr-203, 214–216 (SMR), and Tyr-224 each bind substrate. Asp-288 contacts FAD. Pro-295 lines the substrate pocket. 301 to 302 (LN) contacts FAD.

The protein belongs to the aromatic-ring hydroxylase family. In terms of assembly, homodimer. FAD is required as a cofactor.

It carries out the reaction 4-hydroxybenzoate + NADPH + O2 + H(+) = 3,4-dihydroxybenzoate + NADP(+) + H2O. The protein operates within aromatic compound metabolism; benzoate degradation via hydroxylation; 3,4-dihydroxybenzoate from benzoate: step 2/2. Its function is as follows. Catalyzes the incorporation of an atom of dioxygen into p-hydroxybenzoate (p-OHB) to form 3,4-dihydroxybenzoate (3,4DOHB). The reaction occurs in two parts: reduction of the flavin adenine dinucleotide (FAD) in the enzyme by reduced nicotinamide adenine dinucleotide phosphate (NADPH) in response to binding p-hydroxybenzoate to the enzyme and oxidation of reduced FAD with oxygen to form a hydroperoxide, which then oxygenates p-hydroxybenzoate. The chain is p-hydroxybenzoate hydroxylase (pobA) from Acinetobacter baylyi (strain ATCC 33305 / BD413 / ADP1).